We begin with the raw amino-acid sequence, 251 residues long: Carboxy-S-adenosyl-L-methionine synthase (251 aa).

Residues tyrosine 48, 73-75 (GCS), asparagine 140, and arginine 207 each bind S-adenosyl-L-methionine.

Belongs to the class I-like SAM-binding methyltransferase superfamily. Cx-SAM synthase family. Homodimer.

The enzyme catalyses prephenate + S-adenosyl-L-methionine = carboxy-S-adenosyl-L-methionine + 3-phenylpyruvate + H2O. In terms of biological role, catalyzes the conversion of S-adenosyl-L-methionine (SAM) to carboxy-S-adenosyl-L-methionine (Cx-SAM). In Hydrogenovibrio crunogenus (strain DSM 25203 / XCL-2) (Thiomicrospira crunogena), this protein is Carboxy-S-adenosyl-L-methionine synthase.